A 956-amino-acid chain; its full sequence is uncharacterized protein (956 aa).

Residues 918 to 942 adopt a coiled-coil conformation; sequence NSINEAIEKLNEAADAYQAIIDQQK.

This is an uncharacterized protein from Acanthamoeba polyphaga (Amoeba).